Consider the following 253-residue polypeptide: uncharacterized protein (253 aa).

This sequence belongs to the A.longa ORF167/ORF288 family.

It is found in the plastid. This is an uncharacterized protein from Euglena longa (Euglenophycean alga).